Reading from the N-terminus, the 208-residue chain is MRRDIAGIVLAGGQSRRMGGGDKSLLPLGSGSVLDQILSRFGPQIEILALSANGDPERFSRFGLPVLADTVEGFAGPLAGILTGLEWAIAGTPCKAVVTAAGDTPFLPLDLVDRLAAAARDHPGSIAVASSAGRRHPTFALWPTECRDALRHFLVDEDNRRVSDFIERHGHVEVEFRFVQSAGLDPFFNINVPDDLAQAARLLQSMTS.

GTP-binding positions include 10–12, lysine 23, aspartate 69, and aspartate 103; that span reads LAG. A Mg(2+)-binding site is contributed by aspartate 103.

It belongs to the MobA family. As to quaternary structure, monomer. It depends on Mg(2+) as a cofactor.

Its subcellular location is the cytoplasm. The catalysed reaction is Mo-molybdopterin + GTP + H(+) = Mo-molybdopterin guanine dinucleotide + diphosphate. Its function is as follows. Transfers a GMP moiety from GTP to Mo-molybdopterin (Mo-MPT) cofactor (Moco or molybdenum cofactor) to form Mo-molybdopterin guanine dinucleotide (Mo-MGD) cofactor. The polypeptide is Molybdenum cofactor guanylyltransferase (Mesorhizobium japonicum (strain LMG 29417 / CECT 9101 / MAFF 303099) (Mesorhizobium loti (strain MAFF 303099))).